A 144-amino-acid chain; its full sequence is Mediator of RNA polymerase II transcription subunit 10 (144 aa).

It belongs to the Mediator complex subunit 10 family. In terms of assembly, component of the Mediator complex.

The protein resides in the cytoplasm. Its subcellular location is the nucleus. The protein localises to the nucleus envelope. Its function is as follows. Component of the Mediator complex, a coactivator involved in the regulated transcription of nearly all RNA polymerase II-dependent genes. Mediator functions as a bridge to convey information from gene-specific regulatory proteins to the basal RNA polymerase II transcription machinery. Mediator is recruited to promoters by direct interactions with regulatory proteins and serves as a scaffold for the assembly of a functional preinitiation complex with RNA polymerase II and the general transcription factors. This chain is Mediator of RNA polymerase II transcription subunit 10 (med10), found in Schizosaccharomyces pombe (strain 972 / ATCC 24843) (Fission yeast).